The primary structure comprises 504 residues: ATP synthase subunit alpha (504 aa).

An ATP-binding site is contributed by 169 to 176 (GDRKTGKT).

It belongs to the ATPase alpha/beta chains family. In terms of assembly, F-type ATPases have 2 components, CF(1) - the catalytic core - and CF(0) - the membrane proton channel. CF(1) has five subunits: alpha(3), beta(3), gamma(1), delta(1), epsilon(1). CF(0) has three main subunits: a(1), b(2) and c(9-12). The alpha and beta chains form an alternating ring which encloses part of the gamma chain. CF(1) is attached to CF(0) by a central stalk formed by the gamma and epsilon chains, while a peripheral stalk is formed by the delta and b chains.

It is found in the cell membrane. It catalyses the reaction ATP + H2O + 4 H(+)(in) = ADP + phosphate + 5 H(+)(out). In terms of biological role, produces ATP from ADP in the presence of a proton gradient across the membrane. The alpha chain is a regulatory subunit. This Lactiplantibacillus plantarum (strain ATCC BAA-793 / NCIMB 8826 / WCFS1) (Lactobacillus plantarum) protein is ATP synthase subunit alpha.